The sequence spans 205 residues: Small ribosomal subunit protein uS4 (205 aa).

Residues 18-46 (NIWGRPKSPVNRREYGPGQHGQRRKGKLS) are disordered. One can recognise an S4 RNA-binding domain in the interval 94–154 (RRLDTVVFRA…EASKQLAVVL (61 aa)).

The protein belongs to the universal ribosomal protein uS4 family. Part of the 30S ribosomal subunit. Contacts protein S5. The interaction surface between S4 and S5 is involved in control of translational fidelity.

One of the primary rRNA binding proteins, it binds directly to 16S rRNA where it nucleates assembly of the body of the 30S subunit. Functionally, with S5 and S12 plays an important role in translational accuracy. This chain is Small ribosomal subunit protein uS4, found in Bradyrhizobium sp. (strain ORS 278).